A 123-amino-acid polypeptide reads, in one-letter code: Small ribosomal subunit protein uS12 (123 aa).

The segment at 1 to 27 is disordered; that stretch reads MPTIQQLIRKPRQPKIKRSKSMHLQEC. Over residues 9 to 21 the composition is skewed to basic residues; sequence RKPRQPKIKRSKS. Asp-89 is modified (3-methylthioaspartic acid).

It belongs to the universal ribosomal protein uS12 family. In terms of assembly, part of the 30S ribosomal subunit. Contacts proteins S8 and S17. May interact with IF1 in the 30S initiation complex.

Functionally, with S4 and S5 plays an important role in translational accuracy. Interacts with and stabilizes bases of the 16S rRNA that are involved in tRNA selection in the A site and with the mRNA backbone. Located at the interface of the 30S and 50S subunits, it traverses the body of the 30S subunit contacting proteins on the other side and probably holding the rRNA structure together. The combined cluster of proteins S8, S12 and S17 appears to hold together the shoulder and platform of the 30S subunit. The protein is Small ribosomal subunit protein uS12 of Roseobacter denitrificans (strain ATCC 33942 / OCh 114) (Erythrobacter sp. (strain OCh 114)).